Here is a 204-residue protein sequence, read N- to C-terminus: Recombination protein RecR (204 aa).

Residues 58-75 form a C4-type zinc finger; the sequence is CSVCQNITDVGVDPCALC. Residues 83-181 enclose the Toprim domain; it reads SVICVVESPV…HVTKIARGIP (99 aa).

This sequence belongs to the RecR family.

Its function is as follows. May play a role in DNA repair. It seems to be involved in an RecBC-independent recombinational process of DNA repair. It may act with RecF and RecO. The sequence is that of Recombination protein RecR from Pelodictyon phaeoclathratiforme (strain DSM 5477 / BU-1).